The sequence spans 98 residues: Aspartyl/glutamyl-tRNA(Asn/Gln) amidotransferase subunit C (98 aa).

Belongs to the GatC family. As to quaternary structure, heterotrimer of A, B and C subunits.

The catalysed reaction is L-glutamyl-tRNA(Gln) + L-glutamine + ATP + H2O = L-glutaminyl-tRNA(Gln) + L-glutamate + ADP + phosphate + H(+). It carries out the reaction L-aspartyl-tRNA(Asn) + L-glutamine + ATP + H2O = L-asparaginyl-tRNA(Asn) + L-glutamate + ADP + phosphate + 2 H(+). Allows the formation of correctly charged Asn-tRNA(Asn) or Gln-tRNA(Gln) through the transamidation of misacylated Asp-tRNA(Asn) or Glu-tRNA(Gln) in organisms which lack either or both of asparaginyl-tRNA or glutaminyl-tRNA synthetases. The reaction takes place in the presence of glutamine and ATP through an activated phospho-Asp-tRNA(Asn) or phospho-Glu-tRNA(Gln). In Paenarthrobacter aurescens (strain TC1), this protein is Aspartyl/glutamyl-tRNA(Asn/Gln) amidotransferase subunit C.